A 401-amino-acid chain; its full sequence is Argininosuccinate synthase (401 aa).

Residue 8-16 (AYSGGLDTS) participates in ATP binding. Tyr-85 is a binding site for L-citrulline. ATP is bound at residue Gly-115. L-aspartate is bound by residues Thr-117, Asn-121, and Asp-122. L-citrulline is bound at residue Asn-121. 5 residues coordinate L-citrulline: Arg-125, Ser-173, Ser-182, Glu-258, and Tyr-270.

Belongs to the argininosuccinate synthase family. Type 1 subfamily. In terms of assembly, homotetramer.

It is found in the cytoplasm. It carries out the reaction L-citrulline + L-aspartate + ATP = 2-(N(omega)-L-arginino)succinate + AMP + diphosphate + H(+). It functions in the pathway amino-acid biosynthesis; L-arginine biosynthesis; L-arginine from L-ornithine and carbamoyl phosphate: step 2/3. The sequence is that of Argininosuccinate synthase from Staphylococcus saprophyticus subsp. saprophyticus (strain ATCC 15305 / DSM 20229 / NCIMB 8711 / NCTC 7292 / S-41).